A 413-amino-acid chain; its full sequence is BSD domain-containing protein 1-A (413 aa).

The 53-residue stretch at Trp146–Glu198 folds into the BSD domain. Basic and acidic residues-rich tracts occupy residues Lys208 to Glu219 and His255 to Thr271. Disordered regions lie at residues Lys208–Asp228 and His255–Met386. Positions Thr274–Thr287 are enriched in low complexity. The span at Gln297–Thr322 shows a compositional bias: polar residues. Over residues Gln342–Val352 the composition is skewed to basic and acidic residues. Polar residues predominate over residues Asn356–Asp375. Positions Ile376 to Met386 are enriched in acidic residues.

This is BSD domain-containing protein 1-A (bsdc1-a) from Xenopus laevis (African clawed frog).